A 422-amino-acid chain; its full sequence is Protein king tubby 2 (422 aa).

The segment at 49 to 169 is disordered; the sequence is PSNPDQIISS…ASGHNDAEGD (121 aa). Low complexity predominate over residues 57–81; that stretch reads SSGSPTTVTATGTTTGSVTTTPTSP.

The protein belongs to the TUB family.

It is found in the cytoplasm. The protein localises to the nucleus. This Culex quinquefasciatus (Southern house mosquito) protein is Protein king tubby 2 (king-tubby2).